Consider the following 41-residue polypeptide: Trypsin inhibitor 2c (41 aa).

Disulfide bonds link Cys11–Cys32 and Cys15–Cys28.

Inhibits bovine trypsin with a Ki of 0.174 nM and trypsin-like proteases from G.mellonella larvae. Has no activity against serine proteases chymotrypsin, subtilisin and elastase. Has no activity against cysteine proteases from beetle gut. This chain is Trypsin inhibitor 2c, found in Fagopyrum esculentum (Common buckwheat).